Here is a 691-residue protein sequence, read N- to C-terminus: Choline transporter-like 1 (691 aa).

A compositionally biased stretch (basic and acidic residues) spans 1–10 (MGCAESKDGE). Residues 1-20 (MGCAESKDGEGEAQNNRPKY) form a disordered region. The next 3 helical transmembrane spans lie at 28–48 (WLAIYIIFWLFLIVIAIFSFV), 205–225 (WHIIAMVCGLALLISIALVTM), and 232–252 (IVSWIICVLVIVASVALTVAL). N-linked (GlcNAc...) asparagine glycosylation is present at N261. A run of 2 helical transmembrane segments spans residues 282 to 302 (VLTLAVLATITMIILIVVIYF) and 332 to 352 (LLAFLVLIAFLSFWVAVIICL). N385 is a glycosylation site (N-linked (GlcNAc...) asparagine). The next 4 helical transmembrane spans lie at 408 to 428 (SMFWIYVVGLIWTVEFIFACQ), 527 to 547 (VVAIESINFCPAAGIAWNAMA), 562 to 582 (FILFLGKVVVAALSGLIGIVL), and 591 to 611 (FYMAPVIIIIIFSFFIAHIIL).

This sequence belongs to the CTL (choline transporter-like) family.

It localises to the membrane. The chain is Choline transporter-like 1 from Drosophila melanogaster (Fruit fly).